We begin with the raw amino-acid sequence, 206 residues long: Protein Ta0236 (206 aa).

The 190-residue stretch at 16–205 (DIGTKAVRLA…EKDPEGVVEK (190 aa)) folds into the AMMECR1 domain.

The sequence is that of Protein Ta0236 from Thermoplasma acidophilum (strain ATCC 25905 / DSM 1728 / JCM 9062 / NBRC 15155 / AMRC-C165).